The primary structure comprises 244 residues: Mitochondrial inner membrane protease atp23 (244 aa).

Positions 1–25 (MSSSEGNKPPLVPDSTKESEPQFDP) are disordered. Residue His-144 participates in a divalent metal cation binding. Glu-145 is an active-site residue. His-148 contributes to the a divalent metal cation binding site.

The protein belongs to the peptidase M76 family.

It localises to the mitochondrion inner membrane. Its function is as follows. Has a dual role in the assembly of mitochondrial ATPase. Acts as a protease that removes N-terminal residues of mitochondrial ATPase CF(0) subunit 6 at the intermembrane space side. Also involved in the correct assembly of the membrane-embedded ATPase CF(0) particle, probably mediating association of subunit 6 with the subunit 9 ring. The polypeptide is Mitochondrial inner membrane protease atp23 (atp23) (Botryotinia fuckeliana (strain B05.10) (Noble rot fungus)).